A 328-amino-acid chain; its full sequence is 3-dehydroquinate synthase (328 aa).

This sequence belongs to the archaeal-type DHQ synthase family.

The catalysed reaction is 2-amino-2,3,7-trideoxy-D-lyxo-hept-6-ulosonate + NAD(+) + H2O = 3-dehydroquinate + NH4(+) + NADH + H(+). In terms of biological role, catalyzes the oxidative deamination and cyclization of 2-amino-3,7-dideoxy-D-threo-hept-6-ulosonic acid (ADH) to yield 3-dehydroquinate (DHQ), which is fed into the canonical shikimic pathway of aromatic amino acid biosynthesis. In Methanosphaerula palustris (strain ATCC BAA-1556 / DSM 19958 / E1-9c), this protein is 3-dehydroquinate synthase.